Reading from the N-terminus, the 478-residue chain is Cytochrome c-552 (478 aa).

Positions 1-26 (MTRIKINARRIFSLLIPFFFFTSVHA) are cleaved as a signal peptide. A heme c-binding site is contributed by His-94. Positions 122, 125, and 126 each coordinate heme. Heme c contacts are provided by Cys-160, Cys-163, His-164, Cys-209, Cys-212, and His-213. Positions 215, 216, 261, and 263 each coordinate Ca(2+). Residue Tyr-216 participates in substrate binding. His-264 serves as a coordination point for substrate. Positions 275, 282, 285, 286, 301, 314, 317, 318, and 393 each coordinate heme c.

The protein belongs to the cytochrome c-552 family. Ca(2+) serves as cofactor. It depends on heme c as a cofactor.

It localises to the periplasm. It catalyses the reaction 6 Fe(III)-[cytochrome c] + NH4(+) + 2 H2O = 6 Fe(II)-[cytochrome c] + nitrite + 8 H(+). The protein operates within nitrogen metabolism; nitrate reduction (assimilation). Functionally, catalyzes the reduction of nitrite to ammonia, consuming six electrons in the process. This Escherichia coli (strain ATCC 8739 / DSM 1576 / NBRC 3972 / NCIMB 8545 / WDCM 00012 / Crooks) protein is Cytochrome c-552.